The following is a 275-amino-acid chain: Reticulon-like protein B1 (275 aa).

Basic and acidic residues-rich tracts occupy residues 1–10 (MAEEHKHDES) and 20–38 (VVER…HHGG). The segment at 1 to 68 (MAEEHKHDES…PSSPSSSMKS (68 aa)) is disordered. The residue at position 2 (Ala2) is an N-acetylalanine. Over residues 59–68 (PSSPSSSMKS) the composition is skewed to low complexity. A Reticulon domain is found at 89–274 (PADIFMWKNK…PLGPLKNKKK (186 aa)). 3 consecutive transmembrane segments (helical) span residues 99–119 (KMSG…ELME), 120–140 (YHLL…LFLW), and 194–214 (FLIA…FNFL).

Interacts with VirB2. In terms of tissue distribution, predominantly expressed in root tissues.

The protein resides in the endoplasmic reticulum membrane. It is found in the cell membrane. Functionally, plays a role in the Agrobacterium-mediated plant transformation via its interaction with VirB2, the major component of the T-pilus. The chain is Reticulon-like protein B1 (RTNLB1) from Arabidopsis thaliana (Mouse-ear cress).